Consider the following 699-residue polypeptide: Glutamine--fructose-6-phosphate aminotransferase [isomerizing] (699 aa).

C2 acts as the Nucleophile in catalysis. Residues 2–303 (CGIFGYANFS…DNDIVHISNG (302 aa)) form the Glutamine amidotransferase type-2 domain. SIS domains follow at residues 377-516 (HVSG…QNLV) and 544-689 (SVKS…ADFP).

The enzyme catalyses D-fructose 6-phosphate + L-glutamine = D-glucosamine 6-phosphate + L-glutamate. It functions in the pathway nucleotide-sugar biosynthesis; UDP-N-acetyl-alpha-D-glucosamine biosynthesis; alpha-D-glucosamine 6-phosphate from D-fructose 6-phosphate: step 1/1. Involved in amino sugar synthesis (formation of chitin, supplies the amino sugars of asparagine-linked oligosaccharides of glycoproteins). This chain is Glutamine--fructose-6-phosphate aminotransferase [isomerizing] (GFA1), found in Encephalitozoon cuniculi (strain GB-M1) (Microsporidian parasite).